A 464-amino-acid chain; its full sequence is Elongation factor 1-alpha (464 aa).

The tr-type G domain maps to 5–242 (KTHINIVVIG…DSVVPPQRPT (238 aa)). Residues 14–21 (GHVDSGKS), 91–95 (DAPGH), and 153–156 (NKMD) each bind GTP. Glu301 and Glu374 each carry 5-glutamyl glycerylphosphorylethanolamine.

The protein belongs to the TRAFAC class translation factor GTPase superfamily. Classic translation factor GTPase family. EF-Tu/EF-1A subfamily.

It localises to the cytoplasm. This protein promotes the GTP-dependent binding of aminoacyl-tRNA to the A-site of ribosomes during protein biosynthesis. This chain is Elongation factor 1-alpha, found in Onchocerca volvulus.